The sequence spans 293 residues: Elongation factor Ts (293 aa).

The segment at 80-83 (TDFV) is involved in Mg(2+) ion dislocation from EF-Tu.

This sequence belongs to the EF-Ts family.

Its subcellular location is the cytoplasm. Associates with the EF-Tu.GDP complex and induces the exchange of GDP to GTP. It remains bound to the aminoacyl-tRNA.EF-Tu.GTP complex up to the GTP hydrolysis stage on the ribosome. This Burkholderia ambifaria (strain MC40-6) protein is Elongation factor Ts.